The primary structure comprises 237 residues: Large ribosomal subunit protein uL1 (237 aa).

This sequence belongs to the universal ribosomal protein uL1 family. As to quaternary structure, part of the 50S ribosomal subunit.

In terms of biological role, binds directly to 23S rRNA. The L1 stalk is quite mobile in the ribosome, and is involved in E site tRNA release. Functionally, protein L1 is also a translational repressor protein, it controls the translation of the L11 operon by binding to its mRNA. The polypeptide is Large ribosomal subunit protein uL1 (Dehalococcoides mccartyi (strain ATCC BAA-2266 / KCTC 15142 / 195) (Dehalococcoides ethenogenes (strain 195))).